Reading from the N-terminus, the 165-residue chain is 6,7-dimethyl-8-ribityllumazine synthase (165 aa).

5-amino-6-(D-ribitylamino)uracil contacts are provided by residues F22, 56–58 (SME), and 80–82 (AVI). (2S)-2-hydroxy-3-oxobutyl phosphate is bound at residue 85–86 (ET). H88 serves as the catalytic Proton donor. 5-amino-6-(D-ribitylamino)uracil is bound at residue F113. A (2S)-2-hydroxy-3-oxobutyl phosphate-binding site is contributed by R127.

It belongs to the DMRL synthase family.

It carries out the reaction (2S)-2-hydroxy-3-oxobutyl phosphate + 5-amino-6-(D-ribitylamino)uracil = 6,7-dimethyl-8-(1-D-ribityl)lumazine + phosphate + 2 H2O + H(+). It participates in cofactor biosynthesis; riboflavin biosynthesis; riboflavin from 2-hydroxy-3-oxobutyl phosphate and 5-amino-6-(D-ribitylamino)uracil: step 1/2. In terms of biological role, catalyzes the formation of 6,7-dimethyl-8-ribityllumazine by condensation of 5-amino-6-(D-ribitylamino)uracil with 3,4-dihydroxy-2-butanone 4-phosphate. This is the penultimate step in the biosynthesis of riboflavin. This Thermotoga petrophila (strain ATCC BAA-488 / DSM 13995 / JCM 10881 / RKU-1) protein is 6,7-dimethyl-8-ribityllumazine synthase.